The following is a 440-amino-acid chain: Histidinol dehydrogenase (440 aa).

Y139, Q201, and N224 together coordinate NAD(+). 3 residues coordinate substrate: S247, Q269, and H272. Zn(2+)-binding residues include Q269 and H272. Active-site proton acceptor residues include E337 and H338. 4 residues coordinate substrate: H338, D371, E425, and H430. D371 provides a ligand contact to Zn(2+). H430 serves as a coordination point for Zn(2+).

It belongs to the histidinol dehydrogenase family. The cofactor is Zn(2+).

The enzyme catalyses L-histidinol + 2 NAD(+) + H2O = L-histidine + 2 NADH + 3 H(+). It participates in amino-acid biosynthesis; L-histidine biosynthesis; L-histidine from 5-phospho-alpha-D-ribose 1-diphosphate: step 9/9. Catalyzes the sequential NAD-dependent oxidations of L-histidinol to L-histidinaldehyde and then to L-histidine. The chain is Histidinol dehydrogenase from Prochlorococcus marinus (strain MIT 9312).